Consider the following 462-residue polypeptide: NAD-capped RNA hydrolase NUDT12 (462 aa).

ANK repeat units lie at residues 11–40, 45–74, and 78–98; these read EIVTQFHCSAAEGDIAKLTGILSHSPSLLN, NGWTALMYAARNGHPEIVQFLLEKGCDRSI, and SRQTALDIAVFWGYKHIANLL. The residue at position 185 (Lys-185) is an N6-succinyllysine. Residues Cys-284 and Cys-287 each coordinate Zn(2+). At Lys-292 the chain carries N6-succinyllysine. Residues Cys-302 and Cys-307 each contribute to the Zn(2+) site. Substrate is bound by residues Tyr-318, 354–356, Glu-370, Glu-374, and Glu-415; that span reads AGF. The Nudix hydrolase domain occupies 319 to 453; sequence PRVDPVVIMQ…SRAIAHQLIK (135 aa). Residues Ala-354, Glu-370, Glu-374, and Glu-415 each coordinate Mg(2+). Residues 355–376 carry the Nudix box motif; it reads GFIEPGETIEDAVRREVEEESG. The Microbody targeting signal motif lies at 460–462; that stretch reads PNL.

It belongs to the Nudix hydrolase family. NudC subfamily. In terms of assembly, homodimer. Homodimerization is essential for its catalytic activity and protein stability. Interacts (via ANK repeats) with BLMH. Mg(2+) serves as cofactor. The cofactor is Zn(2+).

Its subcellular location is the cytoplasm. The protein resides in the peroxisome. It is found in the cytoplasmic granule. The catalysed reaction is a 5'-end NAD(+)-phospho-ribonucleoside in mRNA + H2O = a 5'-end phospho-adenosine-phospho-ribonucleoside in mRNA + beta-nicotinamide D-ribonucleotide + 2 H(+). It carries out the reaction NAD(+) + H2O = beta-nicotinamide D-ribonucleotide + AMP + 2 H(+). It catalyses the reaction NADH + H2O = reduced beta-nicotinamide D-ribonucleotide + AMP + 2 H(+). The enzyme catalyses NADPH + H2O = reduced beta-nicotinamide D-ribonucleotide + adenosine 2',5'-bisphosphate + 2 H(+). In terms of biological role, mRNA decapping enzyme that specifically removes the nicotinamide adenine dinucleotide (NAD) cap from a subset of mRNAs by hydrolyzing the diphosphate linkage to produce nicotinamide mononucleotide (NMN) and 5' monophosphate mRNA. The NAD-cap is present at the 5'-end of some RNAs; in contrast to the canonical N7 methylguanosine (m7G) cap, the NAD cap promotes mRNA decay. Preferentially acts on NAD-capped transcripts in response to nutrient stress. Also acts on free nicotinamide adenine dinucleotide molecules: hydrolyzes NAD(H) into NMN(H) and AMP, and NADPH into NMNH and 2',5'-ADP. May act to regulate the concentration of peroxisomal nicotinamide nucleotide cofactors required for oxidative metabolism in this organelle. Regulates the levels of circadian clock components PER1, PER2, PER3 and CRY2 in the liver. This chain is NAD-capped RNA hydrolase NUDT12, found in Pongo abelii (Sumatran orangutan).